A 629-amino-acid polypeptide reads, in one-letter code: Myotonin-protein kinase (629 aa).

Over 1 to 590 the chain is Cytoplasmic; it reads MSAEVRLRRL…PRPGLSEALS (590 aa). In terms of domain architecture, Protein kinase spans 71-339; that stretch reads FEILKVIGRG…AGDFRTHPFF (269 aa). ATP-binding positions include 77-85 and Lys-100; that span reads IGRGAFSEV. Asp-195 serves as the catalytic Proton acceptor. Phosphoserine; by autocatalysis occurs at positions 216 and 228. Thr-234 carries the post-translational modification Phosphothreonine; by autocatalysis. Positions 340–415 constitute an AGC-kinase C-terminal domain; the sequence is FGLDWDGLRD…SCMALRDSEV (76 aa). Residues 457–536 adopt a coiled-coil conformation; sequence VPAAEAEAEV…LQAEGATAVT (80 aa). Residues 591-611 traverse the membrane as a helical; Anchor for type IV membrane protein segment; it reads LLLFAVVLSRAAALGCIGLVA. Topologically, residues 612–629 are lumenal; it reads HAGQLTAVWRRPGAARAP.

This sequence belongs to the protein kinase superfamily. AGC Ser/Thr protein kinase family. DMPK subfamily. As to quaternary structure, homodimer; homodimerization stimulates the kinase activity. Interacts with HSPB2; may enhance DMPK kinase activity. Interacts with PLN; phosphorylates PLN. May interact with RAC1; may regulate DMPK kinase activity. Interacts with LMNA; may regulate nuclear envelope stability. Mg(2+) serves as cofactor. Post-translationally, phosphorylated. Autophosphorylates. Phosphorylation by RAF1 may result in activation of DMPK. Proteolytic processing of the C-terminus may remove the transmembrane domain and release the kinase from membranes stimulating its activity. In terms of tissue distribution, most isoforms are expressed in many tissues including heart, skeletal muscle, liver and brain, except for isoform 2 which is only found in the heart and skeletal muscle, and isoform 14 which is only found in the brain, with high levels in the striatum, cerebellar cortex and pons.

It localises to the endoplasmic reticulum membrane. Its subcellular location is the nucleus outer membrane. The protein resides in the mitochondrion outer membrane. The protein localises to the sarcoplasmic reticulum membrane. It is found in the cell membrane. It localises to the cytoplasm. Its subcellular location is the cytosol. The protein resides in the mitochondrion membrane. It carries out the reaction L-seryl-[protein] + ATP = O-phospho-L-seryl-[protein] + ADP + H(+). It catalyses the reaction L-threonyl-[protein] + ATP = O-phospho-L-threonyl-[protein] + ADP + H(+). With respect to regulation, coiled-coil-mediated oligomerization enhances the catalytic activity. Proteolytic processing of the C-terminus may release the protein from membranes and constitute a mean to regulate the enzyme. May be regulated by HSPB2, RAC1, RAF1 and G-protein second messengers. Its function is as follows. Non-receptor serine/threonine protein kinase which is necessary for the maintenance of skeletal muscle structure and function. May play a role in myocyte differentiation and survival by regulating the integrity of the nuclear envelope and the expression of muscle-specific genes. May also phosphorylate PPP1R12A and inhibit the myosin phosphatase activity to regulate myosin phosphorylation. Also critical to the modulation of cardiac contractility and to the maintenance of proper cardiac conduction activity probably through the regulation of cellular calcium homeostasis. Phosphorylates PLN, a regulator of calcium pumps and may regulate sarcoplasmic reticulum calcium uptake in myocytes. May also phosphorylate FXYD1/PLM which is able to induce chloride currents. May also play a role in synaptic plasticity. This is Myotonin-protein kinase (DMPK) from Homo sapiens (Human).